Reading from the N-terminus, the 413-residue chain is Serine--tRNA ligase (413 aa).

L-serine is bound at residue 221-223; sequence TAE. 252–254 contributes to the ATP binding site; the sequence is RRE. L-serine is bound at residue Glu-275. 339 to 342 is a binding site for ATP; that stretch reads EVSS. Ser-375 serves as a coordination point for L-serine.

This sequence belongs to the class-II aminoacyl-tRNA synthetase family. Type-1 seryl-tRNA synthetase subfamily. As to quaternary structure, homodimer. The tRNA molecule binds across the dimer.

It is found in the cytoplasm. It carries out the reaction tRNA(Ser) + L-serine + ATP = L-seryl-tRNA(Ser) + AMP + diphosphate + H(+). The catalysed reaction is tRNA(Sec) + L-serine + ATP = L-seryl-tRNA(Sec) + AMP + diphosphate + H(+). Its pathway is aminoacyl-tRNA biosynthesis; selenocysteinyl-tRNA(Sec) biosynthesis; L-seryl-tRNA(Sec) from L-serine and tRNA(Sec): step 1/1. Catalyzes the attachment of serine to tRNA(Ser). Is also able to aminoacylate tRNA(Sec) with serine, to form the misacylated tRNA L-seryl-tRNA(Sec), which will be further converted into selenocysteinyl-tRNA(Sec). In Dehalococcoides mccartyi (strain ATCC BAA-2100 / JCM 16839 / KCTC 5957 / BAV1), this protein is Serine--tRNA ligase.